A 484-amino-acid chain; its full sequence is ATP synthase subunit beta (484 aa).

162 to 169 is an ATP binding site; sequence GGAGVGKT.

The protein belongs to the ATPase alpha/beta chains family. F-type ATPases have 2 components, CF(1) - the catalytic core - and CF(0) - the membrane proton channel. CF(1) has five subunits: alpha(3), beta(3), gamma(1), delta(1), epsilon(1). CF(0) has four main subunits: a(1), b(1), b'(1) and c(9-12).

The protein localises to the cellular thylakoid membrane. It carries out the reaction ATP + H2O + 4 H(+)(in) = ADP + phosphate + 5 H(+)(out). Its function is as follows. Produces ATP from ADP in the presence of a proton gradient across the membrane. The catalytic sites are hosted primarily by the beta subunits. The protein is ATP synthase subunit beta of Trichodesmium erythraeum (strain IMS101).